The primary structure comprises 191 residues: ATP synthase subunit b (191 aa).

A helical membrane pass occupies residues 10 to 30; sequence FLVPGPTAIAELIVFLLILFI. The tract at residues 170 to 191 is disordered; it reads RAQRQPAASDVVGGQQREEVHR.

This sequence belongs to the ATPase B chain family. F-type ATPases have 2 components, F(1) - the catalytic core - and F(0) - the membrane proton channel. F(1) has five subunits: alpha(3), beta(3), gamma(1), delta(1), epsilon(1). F(0) has three main subunits: a(1), b(2) and c(10-14). The alpha and beta chains form an alternating ring which encloses part of the gamma chain. F(1) is attached to F(0) by a central stalk formed by the gamma and epsilon chains, while a peripheral stalk is formed by the delta and b chains.

It is found in the cell membrane. Its function is as follows. F(1)F(0) ATP synthase produces ATP from ADP in the presence of a proton or sodium gradient. F-type ATPases consist of two structural domains, F(1) containing the extramembraneous catalytic core and F(0) containing the membrane proton channel, linked together by a central stalk and a peripheral stalk. During catalysis, ATP synthesis in the catalytic domain of F(1) is coupled via a rotary mechanism of the central stalk subunits to proton translocation. In terms of biological role, component of the F(0) channel, it forms part of the peripheral stalk, linking F(1) to F(0). The protein is ATP synthase subunit b of Acidothermus cellulolyticus (strain ATCC 43068 / DSM 8971 / 11B).